The primary structure comprises 264 residues: Phosphoribosylaminoimidazole-succinocarboxamide synthase 1 (264 aa).

Belongs to the SAICAR synthetase family.

It catalyses the reaction 5-amino-1-(5-phospho-D-ribosyl)imidazole-4-carboxylate + L-aspartate + ATP = (2S)-2-[5-amino-1-(5-phospho-beta-D-ribosyl)imidazole-4-carboxamido]succinate + ADP + phosphate + 2 H(+). It participates in purine metabolism; IMP biosynthesis via de novo pathway; 5-amino-1-(5-phospho-D-ribosyl)imidazole-4-carboxamide from 5-amino-1-(5-phospho-D-ribosyl)imidazole-4-carboxylate: step 1/2. This chain is Phosphoribosylaminoimidazole-succinocarboxamide synthase 1 (purC1), found in Mesorhizobium japonicum (strain LMG 29417 / CECT 9101 / MAFF 303099) (Mesorhizobium loti (strain MAFF 303099)).